The primary structure comprises 231 residues: Large ribosomal subunit protein uL1 (231 aa).

It belongs to the universal ribosomal protein uL1 family. Part of the 50S ribosomal subunit.

In terms of biological role, binds directly to 23S rRNA. The L1 stalk is quite mobile in the ribosome, and is involved in E site tRNA release. Protein L1 is also a translational repressor protein, it controls the translation of the L11 operon by binding to its mRNA. The protein is Large ribosomal subunit protein uL1 of Cupriavidus pinatubonensis (strain JMP 134 / LMG 1197) (Cupriavidus necator (strain JMP 134)).